The chain runs to 363 residues: MKIGVFVPIGNNGWLISTHAPQYMPTFELNKAIVQKAEHYHFDFALSMIKLRGFGGKTEFWDHNLESFTLMAGLAAVTSRIQIYATAATLTLPPAIVARMAATIDSISGGRFGVNLVTGWQKPEYEQMGIWPGDDYFSRRYDYLTEYVQVLRDLWGSGKSDFKGDFFTMDDCRVSPQPSVPMKVICAGQSDAGMAFSARYADFNFCFGKGVNTPTAFAPTAARMKQAAEQTGRDVGSYVLFMVIADETDDAARAKWEHYKAGADEEALSWLTEQSQKDTRSGTDTNVRQMADPTSAVNINMGTLVGSYASVARMLDEVASVPGAEGVLLTFDDFLSGIENFGERIQPLMQCRAHLPALTQEVA.

Residues 49–50 (IK), Asn-115, Glu-124, 140–141 (RY), and Ser-190 contribute to the FMN site.

It belongs to the NtaA/SnaA/DszA monooxygenase family. RutA subfamily.

The catalysed reaction is uracil + FMNH2 + NADH + O2 = (Z)-3-ureidoacrylate + FMN + NAD(+) + H2O + H(+). The enzyme catalyses thymine + FMNH2 + NADH + O2 = (Z)-2-methylureidoacrylate + FMN + NAD(+) + H2O + H(+). Functionally, catalyzes the pyrimidine ring opening between N-3 and C-4 by an unusual flavin hydroperoxide-catalyzed mechanism, adding oxygen atoms in the process to yield ureidoacrylate peracid, that immediately reacts with FMN forming ureidoacrylate and FMN-N(5)-oxide. The FMN-N(5)-oxide reacts spontaneously with NADH to produce FMN. Requires the flavin reductase RutF to regenerate FMN in vivo. The polypeptide is Pyrimidine monooxygenase RutA (Escherichia coli O127:H6 (strain E2348/69 / EPEC)).